Here is a 423-residue protein sequence, read N- to C-terminus: Isovaleryl-CoA dehydrogenase, mitochondrial (423 aa).

The N-terminal 29 residues, 1 to 29 (MATATRLLGWRVASWRMRPPPAGFVSQRA), are a transit peptide targeting the mitochondrion. N6-acetyllysine; alternate occurs at positions 55, 64, and 75. N6-succinyllysine; alternate is present on residues Lys-55, Lys-64, and Lys-75. FAD contacts are provided by residues 162-171 (LAMSEPNAGS) and 195-197 (WIT). Residue Ser-171 participates in substrate binding. A substrate-binding site is contributed by 219-220 (SR). Lys-238 is modified (N6-acetyllysine). Lys-259 carries the N6-acetyllysine; alternate modification. At Lys-259 the chain carries N6-succinyllysine; alternate. Substrate is bound by residues Tyr-274 and 281-284 (DLER). Residue Glu-283 is the Proton acceptor of the active site. FAD is bound at residue Arg-309. Lys-315 carries the post-translational modification N6-succinyllysine. FAD-binding positions include Gln-320 and 377–381 (QCFGG). Position 404 to 405 (404 to 405 (AG)) interacts with substrate. 406-408 (TSE) lines the FAD pocket.

The protein belongs to the acyl-CoA dehydrogenase family. In terms of assembly, homotetramer. FAD is required as a cofactor.

It is found in the mitochondrion matrix. The enzyme catalyses 3-methylbutanoyl-CoA + oxidized [electron-transfer flavoprotein] + H(+) = 3-methylbut-2-enoyl-CoA + reduced [electron-transfer flavoprotein]. It carries out the reaction pentanoyl-CoA + oxidized [electron-transfer flavoprotein] + H(+) = (2E)-pentenoyl-CoA + reduced [electron-transfer flavoprotein]. It catalyses the reaction hexanoyl-CoA + oxidized [electron-transfer flavoprotein] + H(+) = (2E)-hexenoyl-CoA + reduced [electron-transfer flavoprotein]. The catalysed reaction is butanoyl-CoA + oxidized [electron-transfer flavoprotein] + H(+) = (2E)-butenoyl-CoA + reduced [electron-transfer flavoprotein]. It participates in amino-acid degradation; L-leucine degradation; (S)-3-hydroxy-3-methylglutaryl-CoA from 3-isovaleryl-CoA: step 1/3. Its function is as follows. Catalyzes the conversion of isovaleryl-CoA/3-methylbutanoyl-CoA to 3-methylbut-2-enoyl-CoA as an intermediate step in the leucine (Leu) catabolic pathway. To a lesser extent, is also able to catalyze the oxidation of other saturated short-chain acyl-CoA thioesters as pentanoyl-CoA, hexenoyl-CoA and butenoyl-CoA. This Pongo abelii (Sumatran orangutan) protein is Isovaleryl-CoA dehydrogenase, mitochondrial (IVD).